The chain runs to 158 residues: SsrA-binding protein (158 aa).

A disordered region spans residues 133–158 (KIHDKRETEAKRDWNRQKQRLLKDNA). The segment covering 136–158 (DKRETEAKRDWNRQKQRLLKDNA) has biased composition (basic and acidic residues).

This sequence belongs to the SmpB family.

It localises to the cytoplasm. In terms of biological role, required for rescue of stalled ribosomes mediated by trans-translation. Binds to transfer-messenger RNA (tmRNA), required for stable association of tmRNA with ribosomes. tmRNA and SmpB together mimic tRNA shape, replacing the anticodon stem-loop with SmpB. tmRNA is encoded by the ssrA gene; the 2 termini fold to resemble tRNA(Ala) and it encodes a 'tag peptide', a short internal open reading frame. During trans-translation Ala-aminoacylated tmRNA acts like a tRNA, entering the A-site of stalled ribosomes, displacing the stalled mRNA. The ribosome then switches to translate the ORF on the tmRNA; the nascent peptide is terminated with the 'tag peptide' encoded by the tmRNA and targeted for degradation. The ribosome is freed to recommence translation, which seems to be the essential function of trans-translation. The protein is SsrA-binding protein of Ruegeria pomeroyi (strain ATCC 700808 / DSM 15171 / DSS-3) (Silicibacter pomeroyi).